The primary structure comprises 446 residues: C4-dicarboxylate transport protein 2 (446 aa).

Helical transmembrane passes span 7–26, 46–64, 77–99, 152–171, 192–211, 221–243, 291–313, 318–340, 353–375, and 381–403; these read PLFGQVLIALALGIALGIWA, MLIAPIVFSVVVVGICGAG, VIYFEVVTTIALALGIALAYAFG, ILQVLLVSILFGCALSLLGE, AVVIRLAPLGVLGAVAFTVG, LGFLVLLFYAAVAVFVVVVLGGI, VVGLVIPTGYSFNLDAFSIYLTL, IAQATNTPLALSDLLLILGVALI, IVILAATLSVIPAIPAIGLVLVL, and IGIARALGNLLGNCVATVVIAAW.

The protein belongs to the dicarboxylate/amino acid:cation symporter (DAACS) (TC 2.A.23) family.

The protein localises to the cell inner membrane. Its function is as follows. Responsible for the transport of dicarboxylates such as succinate, fumarate, and malate from the periplasm across the membrane. The protein is C4-dicarboxylate transport protein 2 (dctA2) of Ralstonia nicotianae (strain ATCC BAA-1114 / GMI1000) (Ralstonia solanacearum).